We begin with the raw amino-acid sequence, 218 residues long: NADH dehydrogenase [ubiquinone] iron-sulfur protein 7, mitochondrial (218 aa).

Over residues 34–48 the composition is skewed to low complexity; the sequence is LPALSPSTSPTSYTR. The segment at 34 to 61 is disordered; the sequence is LPALSPSTSPTSYTRPGPPSTSPPPPGL. The span at 49–60 shows a compositional bias: pro residues; the sequence is PGPPSTSPPPPG. Positions 93, 94, 158, and 188 each coordinate [4Fe-4S] cluster.

This sequence belongs to the complex I 20 kDa subunit family. In terms of assembly, complex I is composed of at least 49 different subunits. This is a component of the iron-sulfur (IP) fragment of the enzyme. [4Fe-4S] cluster is required as a cofactor.

It localises to the mitochondrion. The enzyme catalyses a ubiquinone + NADH + 5 H(+)(in) = a ubiquinol + NAD(+) + 4 H(+)(out). In terms of biological role, core subunit of the mitochondrial membrane respiratory chain NADH dehydrogenase (Complex I) that is believed to belong to the minimal assembly required for catalysis. Complex I functions in the transfer of electrons from NADH to the respiratory chain. The immediate electron acceptor for the enzyme is believed to be ubiquinone. The chain is NADH dehydrogenase [ubiquinone] iron-sulfur protein 7, mitochondrial from Arabidopsis thaliana (Mouse-ear cress).